The sequence spans 851 residues: Phosphatidate phosphatase LPIN3 (851 aa).

Residues 1 to 108 are N-LIP; the sequence is MNYVGQLAET…VPPGLCTSPI (108 aa). 2 disordered regions span residues 114-385 and 400-432; these read SGFP…YLDD and QSDS…EPTL. The span at 140–151 shows a compositional bias: basic residues; it reads GRRKRRRRRKPK. A Nuclear localization signal motif is present at residues 141–148; that stretch reads RRKRRRRR. Thr-159 carries the phosphothreonine modification. Phosphoserine is present on residues Ser-161, Ser-162, and Ser-224. Low complexity predominate over residues 268 to 286; that stretch reads GRAGATSPPRGGPSTPSTS. Basic and acidic residues predominate over residues 418-429; it reads SLRDPNPEHEPE. Ser-463 is subject to Phosphoserine. The span at 542–559 shows a compositional bias: basic and acidic residues; sequence SAQKEKTAAKEQQGEKTE. Positions 542–591 are disordered; that stretch reads SAQKEKTAAKEQQGEKTEVLSSDDDAPDSPVILEIPSLPPSTPPSTPTYK. Residues 578–587 show a composition bias toward pro residues; the sequence is SLPPSTPPST. The segment at 590–792 is C-LIP; sequence YKKSLRLSSD…RIFTVNPRGE (203 aa). A DXDXT motif motif is present at residues 644–648; it reads DIDGT. The LXXIL motif signature appears at 655 to 659; that stretch reads LGHIL.

Belongs to the lipin family. Mg(2+) serves as cofactor. In terms of tissue distribution, significant expression in intestine and other regions of the gastrointestinal tract.

The protein localises to the nucleus. It catalyses the reaction a 1,2-diacyl-sn-glycero-3-phosphate + H2O = a 1,2-diacyl-sn-glycerol + phosphate. Its activity is regulated as follows. Inhibited by N-ethylmaleimide. Functionally, magnesium-dependent phosphatidate phosphatase enzyme which catalyzes the conversion of phosphatidic acid to diacylglycerol during triglyceride, phosphatidylcholine and phosphatidylethanolamine biosynthesis therefore regulates fatty acid metabolism. The chain is Phosphatidate phosphatase LPIN3 from Homo sapiens (Human).